We begin with the raw amino-acid sequence, 322 residues long: Packaging protein 3 (322 aa).

The tract at residues 1 to 24 is disordered; the sequence is MHPILKNIRSQPDQGRAEEHNPEL. The segment at 1 to 127 is interaction with packaging protein 1; it reads MHPILKNIRS…RDVERWQHDT (127 aa).

Belongs to the adenoviridae packaging protein 3 family. As to quaternary structure, part of the genome packaging complex composed of packaging proteins 1, 2 and 3; this complex specifically binds to the packaging sequence on the left end of viral genomic DNA and performs packaging of the viral genome. Interacts with hexon-linking protein IIIa; this interaction is required to promote correct genome packaging. In terms of processing, cleaved at different sites by the viral protease during virion maturation.

It is found in the host nucleus. Its function is as follows. Involved in viral genome packaging through its interaction with packaging proteins 1 and 2. After proteolytic cleavage by adenovirus protease, L1 52/55k protein is removed from the capsid during viral maturation. The protein is Packaging protein 3 of Pantherophis guttatus (Corn snake).